The chain runs to 217 residues: UPF0502 protein ASA_1460 (217 aa).

Belongs to the UPF0502 family.

This is UPF0502 protein ASA_1460 from Aeromonas salmonicida (strain A449).